The primary structure comprises 121 residues: MRFTKDHEWVALDGDVATIGITAHAAEQLGDVVFVEVPEVGRQVKAGDAFAVVESVKAASDVYAPVTGEVVEANEALSGAPETVNAEPEAGGWFAKVRVADPAELDGLMDKAAYDAFVANS.

One can recognise a Lipoyl-binding domain in the interval 16 to 98 (VATIGITAHA…EAGGWFAKVR (83 aa)). N6-lipoyllysine is present on K57.

This sequence belongs to the GcvH family. As to quaternary structure, the glycine cleavage system is composed of four proteins: P, T, L and H. It depends on (R)-lipoate as a cofactor.

In terms of biological role, the glycine cleavage system catalyzes the degradation of glycine. The H protein shuttles the methylamine group of glycine from the P protein to the T protein. This is Glycine cleavage system H protein from Phenylobacterium zucineum (strain HLK1).